The primary structure comprises 174 residues: Translation initiation factor IF-3 (174 aa).

The protein belongs to the IF-3 family. In terms of assembly, monomer.

The protein localises to the cytoplasm. In terms of biological role, IF-3 binds to the 30S ribosomal subunit and shifts the equilibrium between 70S ribosomes and their 50S and 30S subunits in favor of the free subunits, thus enhancing the availability of 30S subunits on which protein synthesis initiation begins. The polypeptide is Translation initiation factor IF-3 (Helicobacter hepaticus (strain ATCC 51449 / 3B1)).